We begin with the raw amino-acid sequence, 517 residues long: Light-independent protochlorophyllide reductase subunit B (517 aa).

Aspartate 36 is a binding site for [4Fe-4S] cluster. The active-site Proton donor is the aspartate 285. Substrate is bound at residue 420–421 (GL).

It belongs to the ChlB/BchB/BchZ family. In terms of assembly, protochlorophyllide reductase is composed of three subunits; BchL, BchN and BchB. Forms a heterotetramer of two BchB and two BchN subunits. [4Fe-4S] cluster is required as a cofactor.

The catalysed reaction is chlorophyllide a + oxidized 2[4Fe-4S]-[ferredoxin] + 2 ADP + 2 phosphate = protochlorophyllide a + reduced 2[4Fe-4S]-[ferredoxin] + 2 ATP + 2 H2O. Its pathway is porphyrin-containing compound metabolism; bacteriochlorophyll biosynthesis (light-independent). Its function is as follows. Component of the dark-operative protochlorophyllide reductase (DPOR) that uses Mg-ATP and reduced ferredoxin to reduce ring D of protochlorophyllide (Pchlide) to form chlorophyllide a (Chlide). This reaction is light-independent. The NB-protein (BchN-BchB) is the catalytic component of the complex. The protein is Light-independent protochlorophyllide reductase subunit B of Bradyrhizobium sp. (strain BTAi1 / ATCC BAA-1182).